A 358-amino-acid polypeptide reads, in one-letter code: tRNA-specific 2-thiouridylase MnmA (358 aa).

Residues 6-13 and L32 contribute to the ATP site; that span reads AMSGGVDS. Residue C101 is the Nucleophile of the active site. C101 and C193 are disulfide-bonded. Position 125 (G125) interacts with ATP. The segment at 143-145 is interaction with tRNA; it reads KDQ. C193 acts as the Cysteine persulfide intermediate in catalysis.

Belongs to the MnmA/TRMU family.

The protein localises to the cytoplasm. The catalysed reaction is S-sulfanyl-L-cysteinyl-[protein] + uridine(34) in tRNA + AH2 + ATP = 2-thiouridine(34) in tRNA + L-cysteinyl-[protein] + A + AMP + diphosphate + H(+). Functionally, catalyzes the 2-thiolation of uridine at the wobble position (U34) of tRNA, leading to the formation of s(2)U34. This Mycobacterium avium (strain 104) protein is tRNA-specific 2-thiouridylase MnmA.